Reading from the N-terminus, the 155-residue chain is Transcriptional repressor NrdR (155 aa).

A zinc finger lies at 3–34 (CPYCQNADTRVVDSRLIGEGEQVRRRRQCPSC). The ATP-cone domain occupies 49 to 139 (PRVVKSDGRR…VYRRFEDVGA (91 aa)).

It belongs to the NrdR family. Requires Zn(2+) as cofactor.

In terms of biological role, negatively regulates transcription of bacterial ribonucleotide reductase nrd genes and operons by binding to NrdR-boxes. The chain is Transcriptional repressor NrdR from Halorhodospira halophila (strain DSM 244 / SL1) (Ectothiorhodospira halophila (strain DSM 244 / SL1)).